The primary structure comprises 546 residues: uncharacterized protein (546 aa).

Residues 52-123 (SVAELRDVQP…NTIEQLLQEN (72 aa)) enclose the SLH domain.

It belongs to the OprB family.

This is an uncharacterized protein from Synechocystis sp. (strain ATCC 27184 / PCC 6803 / Kazusa).